We begin with the raw amino-acid sequence, 275 residues long: Large ribosomal subunit protein uL2 (275 aa).

Residues 208–275 (AGAKRWRGRR…NMIIRDRRKK (68 aa)) form a disordered region. 2 stretches are compositionally biased toward basic residues: residues 209–219 (GAKRWRGRRPT) and 254–263 (KGYKTRRNKR).

Belongs to the universal ribosomal protein uL2 family. In terms of assembly, part of the 50S ribosomal subunit. Forms a bridge to the 30S subunit in the 70S ribosome.

Functionally, one of the primary rRNA binding proteins. Required for association of the 30S and 50S subunits to form the 70S ribosome, for tRNA binding and peptide bond formation. It has been suggested to have peptidyltransferase activity; this is somewhat controversial. Makes several contacts with the 16S rRNA in the 70S ribosome. The sequence is that of Large ribosomal subunit protein uL2 from Coxiella burnetii (strain CbuG_Q212) (Coxiella burnetii (strain Q212)).